The sequence spans 72 residues: Conotoxin VnMKLT2-021 (72 aa).

Residues 1–22 (MKLTCVLIVAVLFLTACQLTTA) form the signal peptide. Positions 23–45 (ASYARSERQHPDLGSSDQNSKLT) are excised as a propeptide. 3 cysteine pairs are disulfide-bonded: C48/C62, C55/C66, and C61/C71.

The protein belongs to the conotoxin O1 superfamily. As to expression, expressed by the venom duct.

It localises to the secreted. This is Conotoxin VnMKLT2-021 from Conus ventricosus (Mediterranean cone).